A 211-amino-acid chain; its full sequence is Glycerol-3-phosphate acyltransferase (211 aa).

6 helical membrane-spanning segments follow: residues 10–30 (FYTW…FGLL), 63–83 (TLTL…IKFL), 90–110 (SIII…PIWL), 126–146 (LGYY…FFIL), 152–172 (LSAL…YPHL), and 174–194 (AHCI…ANIA).

This sequence belongs to the PlsY family. As to quaternary structure, probably interacts with PlsX.

It is found in the cell inner membrane. The enzyme catalyses an acyl phosphate + sn-glycerol 3-phosphate = a 1-acyl-sn-glycero-3-phosphate + phosphate. Its pathway is lipid metabolism; phospholipid metabolism. Catalyzes the transfer of an acyl group from acyl-phosphate (acyl-PO(4)) to glycerol-3-phosphate (G3P) to form lysophosphatidic acid (LPA). This enzyme utilizes acyl-phosphate as fatty acyl donor, but not acyl-CoA or acyl-ACP. The sequence is that of Glycerol-3-phosphate acyltransferase from Bartonella quintana (strain Toulouse) (Rochalimaea quintana).